A 316-amino-acid polypeptide reads, in one-letter code: Adenine deaminase (316 aa).

Residues His14, His16, and His194 each contribute to the Zn(2+) site. The active-site Proton donor is Glu197. Asp275 contributes to the Zn(2+) binding site. Asp276 is a binding site for substrate.

The protein belongs to the metallo-dependent hydrolases superfamily. Adenosine and AMP deaminases family. Adenine deaminase type 2 subfamily. Zn(2+) is required as a cofactor.

The catalysed reaction is adenine + H2O + H(+) = hypoxanthine + NH4(+). Its function is as follows. Catalyzes the hydrolytic deamination of adenine to hypoxanthine. Plays an important role in the purine salvage pathway and in nitrogen catabolism. This Pseudomonas entomophila (strain L48) protein is Adenine deaminase.